A 443-amino-acid polypeptide reads, in one-letter code: MPCTCGNWRRWIRPLVVLLYIVGLIVGVPICIWKLQKMEVGVHTKAWFIAGIFVLMTIPISLWGILQHLVHYTQPELQKPIIRILWMVPIYSVDSWIALKYPDIAIYVDTCRECYEAYVIYNFMIFLLNYLTNRCPNLALVLEAKDQQRHLPPLCCCPPWAMGDVLLFRCKLGVLQYTVVRPVTTVIALICQLTGVYGEGDFSVKNAWTYLVIINNVSQVFAMYCLVLFYKVLKEELNPIQPVGKFLCVKMVVFVSFWQAVFIAILVKAGVISNTWEWKKVQDVATGLQDFIICVEMFLAAVAHHFSFTYKPYVQEAEEGSCFDSFLAMWDISDIRADISEQVRNVGRTVLGRPRKMFFNDDLEQNEHTSLLSSSTQDPISAASSIPPSPSGHYQGFGQTITPQTTPTATTMPEELYSADSPEADLVADHSKVPDESCNHLDS.

The next 7 helical transmembrane spans lie at Leu-15–Leu-35, Ala-46–Leu-66, Ile-84–Ile-104, Pro-182–Phe-202, Tyr-210–Tyr-230, Val-252–Ile-272, and Val-284–His-304. Residues Thr-369 to Asp-378 show a composition bias toward polar residues. The interval Thr-369–Pro-422 is disordered. Residues Gln-399–Thr-411 are compositionally biased toward low complexity.

The protein belongs to the TMEM184 family.

The protein localises to the membrane. Its function is as follows. May play a role in cell growth. In Xenopus tropicalis (Western clawed frog), this protein is Transmembrane protein 184C (tmem184c).